Reading from the N-terminus, the 536-residue chain is Ribulokinase (536 aa).

It belongs to the ribulokinase family.

It carries out the reaction D-ribulose + ATP = D-ribulose 5-phosphate + ADP + H(+). The catalysed reaction is L-ribulose + ATP = L-ribulose 5-phosphate + ADP + H(+). It functions in the pathway carbohydrate degradation; L-arabinose degradation via L-ribulose; D-xylulose 5-phosphate from L-arabinose (bacterial route): step 2/3. The polypeptide is Ribulokinase (Staphylococcus epidermidis (strain ATCC 12228 / FDA PCI 1200)).